Consider the following 182-residue polypeptide: Neuropeptide CCHamide-1 (182 aa).

The first 22 residues, 1–22 (MWYSKCSWTLVVLVALFALVTG), serve as a signal peptide directing secretion. The cysteines at positions 24 and 31 are disulfide-linked. At H35 the chain carries Histidine amide. Residues 39–182 (SGGKAVIDAK…ENYSGYELTK (144 aa)) constitute a propeptide that is removed on maturation. Disordered regions lie at residues 67–103 (NNNNNNQNNQDDDNNDDDSNRNTNANSANNIPLAAPA) and 133–154 (QLQDQQQQGRGRGGQGQYDAAA). The span at 87-103 (RNTNANSANNIPLAAPA) shows a compositional bias: low complexity. The N-linked (GlcNAc...) asparagine glycan is linked to N174.

Expressed in endocrine cells of the larval midgut (at protein level). In the brain, expressed in the optic lobes, lateral protocerebrum, subesophageal ganglion, and intermediate and superior medial protocerebrum (at protein level). Expressed in DN1a neurons but not in other clock neurons and expression follows a rhythmic pattern controlled by the circadian clock (at protein level). In the posterior midgut, expressed in enteroendocrine cells (at protein level). Low levels in larval brain with higher levels in larval and adult gut and adult brain.

Its subcellular location is the secreted. Its function is as follows. Neuropeptide ligand for the CCHamide-1 receptor CCHa1-R. Neuromessenger mediating signaling between neuronal cells of the circadian clock network involved in regulation of sleep latency (the time required to fall asleep), amount of sleep and depth of sleep (arousability). Together with PDF, involved in regulating intensity and periodicity of daytime activity. In subsets of clock neurons modulates the rhythmic expression of PDP1 and PDF, and together with PDF modulates the rhythmic expression of circadian protein PER/period, but not TIM/timeless. Mediates signaling from DN1a (anterior dorsal neurons 1) clock neurons to s-LNv (small ventral lateral neurons) clock neurons through CCHa1-R, contributing to regulation of activity rhythms by the circadian clock, particularly in the morning. May be involved in signaling between clock neurons and non-clock neurons, such as the fan-shaped body, involved in sleep homeostasis. In response to a high protein diet mediates hormonal signaling between the gut and a CCHa1-R expressing subset of dopaminergic cells in the protocerebral anterior medial (PAM) cluster of the brain. This suppresses arousability by mechano-sensory stimulation (but not thermal stimulation) but is not involved in regulation of sleep patterns. The chain is Neuropeptide CCHamide-1 from Drosophila melanogaster (Fruit fly).